The primary structure comprises 396 residues: Tryptophan synthase beta chain (396 aa).

Lys-86 is subject to N6-(pyridoxal phosphate)lysine.

The protein belongs to the TrpB family. Tetramer of two alpha and two beta chains. Requires pyridoxal 5'-phosphate as cofactor.

It carries out the reaction (1S,2R)-1-C-(indol-3-yl)glycerol 3-phosphate + L-serine = D-glyceraldehyde 3-phosphate + L-tryptophan + H2O. The protein operates within amino-acid biosynthesis; L-tryptophan biosynthesis; L-tryptophan from chorismate: step 5/5. In terms of biological role, the beta subunit is responsible for the synthesis of L-tryptophan from indole and L-serine. The sequence is that of Tryptophan synthase beta chain from Yersinia pseudotuberculosis serotype O:1b (strain IP 31758).